We begin with the raw amino-acid sequence, 684 residues long: Protein real-time (684 aa).

In terms of domain architecture, PRELI/MSF1 spans 2–178 (VQKYESPVRI…FVNELKQEGI (177 aa)). Residues 297–474 (TPAVVEKYFP…FLGGSCNVID (178 aa)) form the CRAL-TRIO domain. The GOLD domain occupies 537 to 684 (HHGLYKAVDL…GFSSNSLQSR (148 aa)).

The protein localises to the mitochondrion. This Anopheles gambiae (African malaria mosquito) protein is Protein real-time.